The chain runs to 944 residues: Protein unc-45 homolog A (944 aa).

The segment at 1–25 (MTVSGPGTPEPRPSDPGASSAEELR) is disordered. 3 TPR repeats span residues 21–54 (AEEL…GATP), 58–91 (AILH…DGGD), and 92–125 (VKAL…EPKN). Residue lysine 70 is modified to N6-acetyllysine. Lysine 483 carries the N6-acetyllysine modification.

As to quaternary structure, interacts with PGR isoforms A and B as well as with NR3C1 in the absence of ligand, and with HSP90AB1. Binding to HSP90AB1 involves 2 UNC45A monomers per HSP90AB1 dimer.

The protein resides in the cytoplasm. It is found in the perinuclear region. The protein localises to the nucleus. In terms of biological role, may act as co-chaperone for HSP90 (Potential). Prevents the stimulation of HSP90AB1 ATPase activity by AHSA1. Positive factor in promoting PGR function in the cell. May be necessary for proper folding of myosin (Potential). Necessary for normal cell proliferation. Necessary for normal myotube formation and myosin accumulation during muscle cell development. May play a role in erythropoiesis in stroma cells in the spleen. In Rattus norvegicus (Rat), this protein is Protein unc-45 homolog A (Unc45a).